Reading from the N-terminus, the 1048-residue chain is Putative truncated guanine nucleotide exchange factor SDC25 (1048 aa).

Disordered stretches follow at residues 208–242 (SKQG…VSGS) and 419–444 (LNLD…DEYE). Residues 212 to 224 (TSCSSETSHHSPS) show a composition bias toward low complexity. Residues 578–710 (SNNRIKGGSK…LLKEVNQKFK (133 aa)) enclose the N-terminal Ras-GEF domain. In terms of domain architecture, Ras-GEF spans 748 to 995 (DPVLFATQLT…YQLSLIIEPK (248 aa)). The interval 997-1048 (RKKVVPNSNSNNKSQEKSRDDQTDEGKTSTKKDRFPKFQLHKTKKKAPKVSK) is disordered. Residues 1010–1032 (SQEKSRDDQTDEGKTSTKKDRFP) are compositionally biased toward basic and acidic residues. Over residues 1035-1048 (QLHKTKKKAPKVSK) the composition is skewed to basic residues.

In terms of biological role, promotes the exchange of Ras-bound GDP by GTP. The protein is Putative truncated guanine nucleotide exchange factor SDC25 (SDC25) of Saccharomyces cerevisiae (strain ATCC 204508 / S288c) (Baker's yeast).